The sequence spans 430 residues: Trigger factor (430 aa).

Positions 163–248 constitute a PPIase FKBP-type domain; that stretch reads GDIAVIDFEG…LNSLKRKNMP (86 aa).

The protein belongs to the FKBP-type PPIase family. Tig subfamily.

Its subcellular location is the cytoplasm. It catalyses the reaction [protein]-peptidylproline (omega=180) = [protein]-peptidylproline (omega=0). Functionally, involved in protein export. Acts as a chaperone by maintaining the newly synthesized protein in an open conformation. Functions as a peptidyl-prolyl cis-trans isomerase. The sequence is that of Trigger factor from Brevibacillus brevis (strain 47 / JCM 6285 / NBRC 100599).